We begin with the raw amino-acid sequence, 161 residues long: Cyclic pyranopterin monophosphate synthase (161 aa).

Substrate-binding positions include 75–77 (MCH) and 115–116 (ME). Asp-130 is a catalytic residue.

Belongs to the MoaC family. As to quaternary structure, homohexamer; trimer of dimers.

The enzyme catalyses (8S)-3',8-cyclo-7,8-dihydroguanosine 5'-triphosphate = cyclic pyranopterin phosphate + diphosphate. Its pathway is cofactor biosynthesis; molybdopterin biosynthesis. In terms of biological role, catalyzes the conversion of (8S)-3',8-cyclo-7,8-dihydroguanosine 5'-triphosphate to cyclic pyranopterin monophosphate (cPMP). This Bacillus thuringiensis subsp. konkukian (strain 97-27) protein is Cyclic pyranopterin monophosphate synthase.